Here is an 83-residue protein sequence, read N- to C-terminus: Cytochrome b559 subunit alpha (83 aa).

The helical transmembrane segment at 21 to 35 (VIHSITIPSLFIAGW) threads the bilayer. Heme is bound at residue His-23.

It belongs to the PsbE/PsbF family. In terms of assembly, heterodimer of an alpha subunit and a beta subunit. PSII is composed of 1 copy each of membrane proteins PsbA, PsbB, PsbC, PsbD, PsbE, PsbF, PsbH, PsbI, PsbJ, PsbK, PsbL, PsbM, PsbT, PsbX, PsbY, PsbZ, Psb30/Ycf12, at least 3 peripheral proteins of the oxygen-evolving complex and a large number of cofactors. It forms dimeric complexes. Heme b serves as cofactor.

The protein localises to the plastid. The protein resides in the chloroplast thylakoid membrane. In terms of biological role, this b-type cytochrome is tightly associated with the reaction center of photosystem II (PSII). PSII is a light-driven water:plastoquinone oxidoreductase that uses light energy to abstract electrons from H(2)O, generating O(2) and a proton gradient subsequently used for ATP formation. It consists of a core antenna complex that captures photons, and an electron transfer chain that converts photonic excitation into a charge separation. The sequence is that of Cytochrome b559 subunit alpha from Mesembryanthemum crystallinum (Common ice plant).